A 635-amino-acid chain; its full sequence is MINISFPDGSVKQFEKNITAFEIAVVISTSLAKAAMIAEINGDLKDLSTQIDNDCRLRILTAKDPECLEVIRHDAAHLTAEAVKELFPETQVTIGPAIENGYYYDFARDKPFTTDDLAVIEAKMHELAKKNEKVTRELWDREKAVEFFKSIGEHYKAEIIASIPSNEPISLYRQGNFIDLCRGPHAPSTGFVKHFKLMKVAGAYWRGDSRNEVLQRIYGTAWATKEQLESYLFMLEEAEKRDHRKLGKELDLFHFQEEAQGMVFWHDKGWSVYNTIEQYIRRKIRKNGYIEVKTPVLVDKSLWELSGHWEKFRDDMFALETDDKTLALKPMNCPCHVQIFKQGIKSYRDLPLRMSEFGLCHRNEASGALHGLMRVRSLVQDDAHIFCAEEQITDETVSFCKLLTEVYKDFGFTDIKVKFSDRPEVRAGSSETWDKAENALKEAVEKAGYSYTLNPGEGAFYGPKLEFVLTDAIGRQWQCGTLQMDFVLPERLDASYVAASGEKKRPVMLHRAILGSLERFIGILIEEYAGRFPLWLAPVQVAIATITSDLNDYALEVQKALIESGVRVDINISPDKINYKIREFSNQKVPMIAVIGKQEKENKQVTIRRLGTTEQEVLSIEQLIEYIREENSKYI.

A TGS domain is found at 1 to 61 (MINISFPDGS…DNDCRLRILT (61 aa)). The tract at residues 242-533 (DHRKLGKELD…LIEEYAGRFP (292 aa)) is catalytic. 3 residues coordinate Zn(2+): Cys333, His384, and His510.

The protein belongs to the class-II aminoacyl-tRNA synthetase family. In terms of assembly, homodimer. It depends on Zn(2+) as a cofactor.

The protein localises to the cytoplasm. It catalyses the reaction tRNA(Thr) + L-threonine + ATP = L-threonyl-tRNA(Thr) + AMP + diphosphate + H(+). In terms of biological role, catalyzes the attachment of threonine to tRNA(Thr) in a two-step reaction: L-threonine is first activated by ATP to form Thr-AMP and then transferred to the acceptor end of tRNA(Thr). Also edits incorrectly charged L-seryl-tRNA(Thr). The sequence is that of Threonine--tRNA ligase from Rickettsia bellii (strain RML369-C).